The sequence spans 493 residues: UDP-glucose 6-dehydrogenase (493 aa).

NAD(+)-binding positions include 11–16, aspartate 36, arginine 41, and 89–93; these read GAGYVG and VNTPT. The tract at residues 88–110 is disordered; the sequence is SVNTPTKTYGMGKGRAADLKYIE. N6-acetyllysine is present on lysine 107. The allosteric switch region stretch occupies residues 129 to 135; it reads KSTVPVR. Residue 130–132 participates in NAD(+) binding; sequence STV. Glutamate 161 serves as the catalytic Proton donor/acceptor. Residues 161–165, 220–224, arginine 260, and 267–273 each bind substrate; these read EFLAE, KLAAN, and KASVGFG. Glutamate 165 contributes to the NAD(+) binding site. Residue lysine 220 is the Proton donor/acceptor of the active site. The active-site Nucleophile is cysteine 276. Residue 276–279 coordinates NAD(+); it reads CFQK. An important for formation of active hexamer structure region spans residues 321-325; the sequence is SLFNT. 338–339 serves as a coordination point for substrate; it reads FK. Arginine 346 is a binding site for NAD(+). Substrate is bound at residue arginine 442. Residues 466 to 493 form a disordered region; sequence VSSKRIPYTPGEIPKFSLQDPPNKKPKV. A Phosphothreonine modification is found at threonine 474.

This sequence belongs to the UDP-glucose/GDP-mannose dehydrogenase family. As to quaternary structure, homohexamer.

It catalyses the reaction UDP-alpha-D-glucose + 2 NAD(+) + H2O = UDP-alpha-D-glucuronate + 2 NADH + 3 H(+). It participates in nucleotide-sugar biosynthesis; UDP-alpha-D-glucuronate biosynthesis; UDP-alpha-D-glucuronate from UDP-alpha-D-glucose: step 1/1. Its activity is regulated as follows. UDP-alpha-D-xylose (UDX) acts as a feedback inhibitor. It binds at the same site as the substrate, but functions as allosteric inhibitor by triggering a conformation change that disrupts the active hexameric ring structure and gives rise to an inactive, horseshoe-shaped hexamer. Catalyzes the formation of UDP-alpha-D-glucuronate, a constituent of complex glycosaminoglycans. Required for the biosynthesis of chondroitin sulfate and heparan sulfate. Required for embryonic development via its role in the biosynthesis of glycosaminoglycans. Required for proper brain and neuronal development. This is UDP-glucose 6-dehydrogenase (Ugdh) from Mus musculus (Mouse).